The primary structure comprises 484 residues: Suppressor of fused homolog (484 aa).

The tract at residues 1–21 (MAELRPSVAPGPAAPPASGPS) is disordered. A compositionally biased stretch (pro residues) spans 12–21 (PAAPPASGPS). Residue Lys257 forms a Glycyl lysine isopeptide (Lys-Gly) (interchain with G-Cter in ubiquitin) linkage. The interval 279–360 (SRPPEDEEDS…SSTAIIPHEL (82 aa)) is disordered. A Phosphoserine modification is found at Ser301. N6-acetyllysine is present on Lys303. Lys321 participates in a covalent cross-link: Glycyl lysine isopeptide (Lys-Gly) (interchain with G-Cter in SUMO2). The segment covering 336-347 (THDRAPSRKDSL) has biased composition (basic and acidic residues). A phosphoserine mark is found at Ser342, Ser346, and Ser352. A Phosphothreonine modification is found at Thr353. Ser481 is subject to Phosphoserine.

It belongs to the SUFU family. As to quaternary structure, may form homodimers. Interacts with ULK3; inactivating the protein kinase activity of ULK3. Interacts with RAB23. Part of a DNA-bound corepressor complex containing SAP18, GLI1 and SIN3. Part of a complex containing CTNNB1. Binds BTRC, GLI2, GLI3, SAP18 and STK36. Binds both free and DNA-bound GLI1. Interacts with KIF7. Interacts with GLI3FL and this interaction regulates the formation of either repressor or activator forms of GLI3. Its association with GLI3FL is regulated by Hh signaling and dissociation of the SUFU-GLI3 interaction requires the presence of the ciliary motor KIF3A. Polyubiquitinated at Lys-257 by the SCF(FBXL17) complex, leading to its subsequent degradation and allowing the release of GLI1 for proper hedgehog/smoothened signal transduction. Ubiquitination is impaired by phosphorylation at Ser-342, Ser-346, Ser-352 and Thr-353. In terms of processing, phosphorylation at Ser-342, Ser-346, Ser-352 and Thr-353 prevents ubiquitination by the SCF(FBXL17) complex. Widely expressed in adult and fetal tissues.

It localises to the cytoplasm. It is found in the nucleus. Functionally, negative regulator in the hedgehog/smoothened signaling pathway. Down-regulates GLI1-mediated transactivation of target genes. Part of a corepressor complex that acts on DNA-bound GLI1. May also act by linking GLI1 to BTRC and thereby targeting GLI1 to degradation by the proteasome. Sequesters GLI1, GLI2 and GLI3 in the cytoplasm, this effect is overcome by binding of STK36 to both SUFU and a GLI protein. Negative regulator of beta-catenin signaling. Regulates the formation of either the repressor form (GLI3R) or the activator form (GLI3A) of the full-length form of GLI3 (GLI3FL). GLI3FL is complexed with SUFU in the cytoplasm and is maintained in a neutral state. Without the Hh signal, the SUFU-GLI3 complex is recruited to cilia, leading to the efficient processing of GLI3FL into GLI3R. When Hh signaling is initiated, SUFU dissociates from GLI3FL and the latter translocates to the nucleus, where it is phosphorylated, destabilized, and converted to a transcriptional activator (GLI3A). Required for normal embryonic development. Required for the proper formation of hair follicles and the control of epidermal differentiation. The sequence is that of Suppressor of fused homolog from Mus musculus (Mouse).